Reading from the N-terminus, the 177-residue chain is MRPSRSTRRHLISLLLFLFHSETACRPSGKRPCRMQAFRIWDVNQKTFYLRNNQLVAGYLQGPNAKLEERIDVVPLEPQLLFLGIQRGKLCLSCVKSGDKMKLHLEAVNITDLGKNKEQDKRFTFIRSNSGPTTTFESASCPGWFLCTALEADQPVSLTNTPDDSIVVTKFYFQEDQ.

A signal peptide spans 1-25; that stretch reads MRPSRSTRRHLISLLLFLFHSETAC. C91 and C141 are oxidised to a cystine. Residue N109 is glycosylated (N-linked (GlcNAc...) asparagine).

This sequence belongs to the IL-1 family.

The protein resides in the secreted. In terms of biological role, anti-inflammatory antagonist of interleukin-1 family of proinflammatory cytokines such as interleukin-1beta/IL1B and interleukin-1alpha/IL1A. Protects from immune dysregulation and uncontrolled systemic inflammation triggered by IL1 for a range of innate stimulatory agents such as pathogens. The chain is Interleukin-1 receptor antagonist protein (IL1RN) from Oryctolagus cuniculus (Rabbit).